An 88-amino-acid polypeptide reads, in one-letter code: uncharacterized protein (88 aa).

Transmembrane regions (helical) follow at residues 3 to 23, 33 to 53, and 61 to 81; these read VFIL…CSVA, VAPG…AFTA, and FIGG…PFFF.

The protein resides in the cell membrane. This is an uncharacterized protein from Bacillus subtilis (strain 168).